A 245-amino-acid polypeptide reads, in one-letter code: Lactate utilization protein A 1 (245 aa).

This sequence belongs to the LutA/YkgE family.

Is involved in L-lactate degradation and allows cells to grow with lactate as the sole carbon source. In Bacillus mycoides (strain KBAB4) (Bacillus weihenstephanensis), this protein is Lactate utilization protein A 1.